The primary structure comprises 269 residues: Imidazoleglycerol-phosphate dehydratase 1, chloroplastic (269 aa).

Disordered regions lie at residues 1–31 (MTTAPFVSPSLPRLHSARASPFPKPSVGSGG) and 54–73 (SGVGGNGSPMAPEESTVSSR). The N-terminal 52 residues, 1–52 (MTTAPFVSPSLPRLHSARASPFPKPSVGSGGGVAFPARTYGSSLRLRSAVMS), are a transit peptide targeting the chloroplast. Substrate contacts are provided by residues glutamate 83, 109–117 (HMLDQLASH), 135–139 (HHSNE), arginine 161, and arginine 183. Mn(2+) contacts are provided by histidine 109, histidine 135, histidine 136, and glutamate 139. 4 residues coordinate Mn(2+): histidine 207, histidine 231, histidine 232, and glutamate 235. Substrate-binding positions include 231–239 (HHIIEATFK) and 261–263 (SSK).

It belongs to the imidazoleglycerol-phosphate dehydratase family. Mn(2+) serves as cofactor.

The protein resides in the plastid. Its subcellular location is the chloroplast. The enzyme catalyses D-erythro-1-(imidazol-4-yl)glycerol 3-phosphate = 3-(imidazol-4-yl)-2-oxopropyl phosphate + H2O. It functions in the pathway amino-acid biosynthesis; L-histidine biosynthesis; L-histidine from 5-phospho-alpha-D-ribose 1-diphosphate: step 6/9. In Triticum aestivum (Wheat), this protein is Imidazoleglycerol-phosphate dehydratase 1, chloroplastic.